The primary structure comprises 502 residues: Cytochrome P450 2J3 (502 aa).

A heme-binding site is contributed by cysteine 448.

Belongs to the cytochrome P450 family. Heme is required as a cofactor. Abundantly expressed in heart and liver.

Its subcellular location is the endoplasmic reticulum membrane. It localises to the microsome membrane. It carries out the reaction an organic molecule + reduced [NADPH--hemoprotein reductase] + O2 = an alcohol + oxidized [NADPH--hemoprotein reductase] + H2O + H(+). This enzyme metabolizes arachidonic acid predominantly via a NADPH-dependent olefin epoxidation mainly to 14,15-, 11,12-, and 8,9-epoxyeicosatrienoic acids (EET). It also acts as an omega-1-hydroxylase by metabolizing arachidonic acid to 19-hydroxyeicosatetraenoic acid (19-OH-AA). This is Cytochrome P450 2J3 (Cyp2j3) from Rattus norvegicus (Rat).